A 418-amino-acid chain; its full sequence is Secreted aspartic protease 6 (418 aa).

The signal sequence occupies residues 1 to 18; it reads MFLKNILSVLRFALLIDA. A propeptide spans 19–76 (activation peptide); it reads APVKRSPGFVTLDFNVKRSLVVPDDPTAESKRSPLFLDLDPTQIPVDDTGRNVGVDKR. The 315-residue stretch at 90–404 folds into the Peptidase A1 domain; the sequence is YSADITVGSN…DLDDKKISMA (315 aa). Asp-108 is a catalytic residue. 108–110 is a pepstatin A binding site; sequence DTG. Cys-123 and Cys-135 are oxidised to a cystine. Asn-138 carries N-linked (GlcNAc...) asparagine glycosylation. Asp-268 serves as a coordination point for Zn(2+). The active site involves Asp-294. 294–298 serves as a coordination point for pepstatin A; that stretch reads DSGTT. A disulfide bridge links Cys-332 with Cys-370.

It belongs to the peptidase A1 family.

It is found in the secreted. It carries out the reaction Preferential cleavage at the carboxyl of hydrophobic amino acids, but fails to cleave 15-Leu-|-Tyr-16, 16-Tyr-|-Leu-17 and 24-Phe-|-Phe-25 of insulin B chain. Activates trypsinogen, and degrades keratin.. Its activity is regulated as follows. Inhibited by pepstatin A analogs. Functionally, secreted aspartic peptidases (SAPs) are a group of ten acidic hydrolases considered as key virulence factors. These enzymes supply the fungus with nutrient amino acids as well as are able to degrade the selected host's proteins involved in the immune defense. Moreover, acts toward human hemoglobin though limited proteolysis to generate a variety of antimicrobial hemocidins, enabling to compete with the other microorganisms of the same physiological niche using the microbicidal peptides generated from the host protein. The chain is Secreted aspartic protease 6 from Candida albicans (Yeast).